The chain runs to 679 residues: Methionine--tRNA ligase (679 aa).

The Zn(2+) site is built by cysteine 147, cysteine 150, cysteine 160, and cysteine 163. A 'KMSKS' region motif is present at residues 332 to 336 (KISTS). Threonine 335 contributes to the ATP binding site. The region spanning 578-679 (DFMKLDIRVG…REVKPGSEVK (102 aa)) is the tRNA-binding domain.

The protein belongs to the class-I aminoacyl-tRNA synthetase family. MetG type 1 subfamily. In terms of assembly, homodimer. The cofactor is Zn(2+).

Its subcellular location is the cytoplasm. It carries out the reaction tRNA(Met) + L-methionine + ATP = L-methionyl-tRNA(Met) + AMP + diphosphate. In terms of biological role, is required not only for elongation of protein synthesis but also for the initiation of all mRNA translation through initiator tRNA(fMet) aminoacylation. The sequence is that of Methionine--tRNA ligase from Bacteroides fragilis (strain YCH46).